Here is a 521-residue protein sequence, read N- to C-terminus: MAQLSSQGNNAIIYLSYAFMLATGLFLAWKFSSNKDFLSSNGTQRGIPLALNFVASAMGVGIITTYAQIANIAGLHGLLVYTICGAIPIVGFAVVGPVIRRKCPDGFILTEWVRHRFGMVTALYLSAFTCLTMFLFMVGELSAIRSAIETLTGLNALGAVIVECVVTTIYTFFGGFRVSFITDNFQGVCVLLLLIICAAGMGSYIEIDTSKIGPSGLLKANKLGWQLVYILFVAIVTNDCFMSGFWLRTFASKTDKDLWIGTSIAAFVTFAICTLIGTTGFLAVWSGDLIVGDENGYDAFFILLSKMPRWLVAFVLIFCIVLSTCTFDSLQSAMVSTISNDVFRNKLHINYVRIMLILIMVPIVVLAVKVADNILQIYLIADLVSAAIIPSVFLGLADTWFWYLRGFDVMAGGLGALLGVFIFGTVYYHSAREGGKLLLIWNGLYDSSDWGPFGAFVIAPVGGVIITLASAALRIAVLYAYSKVTGKEFTALDKPVTVEVENQDHTYGSIDDDESDTKKVV.

The helical transmembrane segment at 11 to 31 (AIIYLSYAFMLATGLFLAWKF) threads the bilayer. Asparagine 41 carries an N-linked (GlcNAc...) asparagine glycan. 12 helical membrane passes run 47 to 67 (IPLALNFVASAMGVGIITTYA), 79 to 99 (LVYTICGAIPIVGFAVVGPVI), 117 to 137 (FGMVTALYLSAFTCLTMFLFM), 156 to 176 (ALGAVIVECVVTTIYTFFGGF), 187 to 207 (GVCVLLLLIICAAGMGSYIEI), 227 to 247 (LVYILFVAIVTNDCFMSGFWL), 264 to 284 (IAAFVTFAICTLIGTTGFLAV), 310 to 330 (WLVAFVLIFCIVLSTCTFDSL), 354 to 374 (IMLILIMVPIVVLAVKVADNI), 377 to 397 (IYLIADLVSAAIIPSVFLGLA), 406 to 426 (GFDVMAGGLGALLGVFIFGTV), and 453 to 473 (FGAFVIAPVGGVIITLASAAL).

The protein belongs to the sodium:solute symporter (SSF) (TC 2.A.21) family.

It is found in the membrane. It catalyses the reaction spermidine(in) = spermidine(out). Spermidine transporter that is also used by salivary gland-secreted histatin 5 (Hst 5) to enter into candidal cells. A major component of host nonimmune defense systems is salivary histatins, a family of small (3-4 kDa), histidine-rich, cationic proteins secreted by major salivary glands in humans and higher primates. Hst 5 is the most potent of the 12 histatin family members and has fungicidal activity against blastoconidial and filamentous forms of Candida albicans. DUR31 only functions under high concentrations of Hst 5. Hst 5 cojugates to spermidine to be uptaken by DUR31. The polypeptide is Spermidine transporter DUR31 (Candida albicans (strain SC5314 / ATCC MYA-2876) (Yeast)).